The sequence spans 61 residues: Large ribosomal subunit protein uL30 (61 aa).

This sequence belongs to the universal ribosomal protein uL30 family. Part of the 50S ribosomal subunit.

The sequence is that of Large ribosomal subunit protein uL30 from Nitrosomonas europaea (strain ATCC 19718 / CIP 103999 / KCTC 2705 / NBRC 14298).